Reading from the N-terminus, the 982-residue chain is E3 ubiquitin-protein ligase CBL-B (982 aa).

The segment covering 1 to 14 has biased composition (low complexity); that stretch reads MASSSSSSSSTNSS. A disordered region spans residues 1 to 25; it reads MASSSSSSSSTNSSAVTGRLPGARS. Residues 46–178 are 4H; that stretch reads PPKQAAADRR…KAIFPSGQFQ (133 aa). One can recognise a Cbl-PTB domain in the interval 46 to 354; it reads PPKQAAADRR…GRSYNPDLTD (309 aa). The tract at residues 179 to 251 is EF-hand-like; it reads GDNFRITKAD…FEFDIFTRLF (73 aa). Ca(2+) is bound by residues Asp232, Thr234, Asn236, Tyr238, and Glu243. An SH2-like region spans residues 252–354; it reads QPWTSILRNW…GRSYNPDLTD (103 aa). 4-O-phospho-L-tyrosine is bound at residue Arg297. The linker stretch occupies residues 355–383; it reads LCEPTPHDHIKVTQEQYELYCEMGSTFQL. The RING-type zinc-finger motif lies at 384-423; the sequence is CKICAENDKDVKIEPCGHLMCTSCLTSWQESDGQGCPFCR. 3 disordered regions span residues 480-582, 709-728, and 766-911; these read MNER…RTCR, VRNSAEEDDSEYKIPSSHPV, and LKQP…PVPR. The span at 483–497 shows a compositional bias: polar residues; sequence RQNSPVTSPGSSPLS. The span at 554–576 shows a compositional bias: pro residues; it reads LPAPPPPLREPPPPPERPPPIPP. Residues 825-834 show a composition bias toward pro residues; that stretch reads PSQPPPPPPA. Positions 927 to 970 constitute a UBA domain; sequence SLAENVDAKIAKLMGEGFPFEEVKRALEIAQNNVDVARSILREF.

As to quaternary structure, interacts with several SH3 domain-containing proteins and with poly-ubiquitinated proteins.

It is found in the cytoplasm. It catalyses the reaction S-ubiquitinyl-[E2 ubiquitin-conjugating enzyme]-L-cysteine + [acceptor protein]-L-lysine = [E2 ubiquitin-conjugating enzyme]-L-cysteine + N(6)-ubiquitinyl-[acceptor protein]-L-lysine.. Its pathway is protein modification; protein ubiquitination. Functionally, E3 ubiquitin-protein ligase which accepts ubiquitin from specific E2 ubiquitin-conjugating enzymes, and transfers it to substrates, generally promoting their degradation by the proteasome. In Xenopus tropicalis (Western clawed frog), this protein is E3 ubiquitin-protein ligase CBL-B (cblb).